The sequence spans 677 residues: Methionine--tRNA ligase (677 aa).

The short motif at 15-25 is the 'HIGH' region element; the sequence is PYANGSIHLGH. Residues Cys-146, Cys-149, Cys-159, and Cys-162 each coordinate Zn(2+). The short motif at 333–337 is the 'KMSKS' region element; the sequence is KMSKS. Lys-336 is an ATP binding site. The tRNA-binding domain maps to 575 to 677; sequence DFAKVDLRVA…DGAKPGQQVK (103 aa).

Belongs to the class-I aminoacyl-tRNA synthetase family. MetG type 1 subfamily. Homodimer. It depends on Zn(2+) as a cofactor.

Its subcellular location is the cytoplasm. The catalysed reaction is tRNA(Met) + L-methionine + ATP = L-methionyl-tRNA(Met) + AMP + diphosphate. In terms of biological role, is required not only for elongation of protein synthesis but also for the initiation of all mRNA translation through initiator tRNA(fMet) aminoacylation. The protein is Methionine--tRNA ligase of Salmonella arizonae (strain ATCC BAA-731 / CDC346-86 / RSK2980).